The primary structure comprises 418 residues: UDP-N-acetylglucosamine 1-carboxyvinyltransferase (418 aa).

A phosphoenolpyruvate-binding site is contributed by 22-23 (KN). Residue R92 participates in UDP-N-acetyl-alpha-D-glucosamine binding. Residue C116 is the Proton donor of the active site. 2-(S-cysteinyl)pyruvic acid O-phosphothioketal is present on C116. Residues D305 and I327 each coordinate UDP-N-acetyl-alpha-D-glucosamine.

The protein belongs to the EPSP synthase family. MurA subfamily.

The protein localises to the cytoplasm. The enzyme catalyses phosphoenolpyruvate + UDP-N-acetyl-alpha-D-glucosamine = UDP-N-acetyl-3-O-(1-carboxyvinyl)-alpha-D-glucosamine + phosphate. It participates in cell wall biogenesis; peptidoglycan biosynthesis. In terms of biological role, cell wall formation. Adds enolpyruvyl to UDP-N-acetylglucosamine. The chain is UDP-N-acetylglucosamine 1-carboxyvinyltransferase from Gluconobacter oxydans (strain 621H) (Gluconobacter suboxydans).